The following is a 202-amino-acid chain: Response regulator RamR (202 aa).

The interval 1-121 is response regulatory; that stretch reads MGEMVRIAVV…LITAVHTVAR (121 aa). The region spanning 135-200 is the HTH luxR-type domain; that stretch reads LKGAEMPLTT…DAIRIVQSAG (66 aa). The segment at residues 159–178 is a DNA-binding region (H-T-H motif); sequence IAEIAARLHLSRGTVRNYMA.

As to quaternary structure, homodimer, in the absence of phosphorylation. May be phosphorylated by an unknown kinase, probably on Asp-56.

Its function is as follows. A transcription factor required for aerial hyphae formation on rich medium. Activates transcription of ramC. Might be part of a two-component regulatory system. Binds the promoter of ramC. Non-phosphorylated protein cooperatively binds multiple sites in the ramC promoter. Has not been seen to autophosphorylate using the small molecule phosphodonors phosphoramidate, acetyl phosphate or carbamoyl phosphate. Upon low expression suppresses the bald (bld, no aerial hyphae) phenotype of citA but not bldJ mutants; higher expression also suppresses the bldJ mutant as well as several other bld mutations, inducing SapB production even on media where SapB is normally not produced. Expression of the ram locus (ramA, ramB and ramR) induces rapid aerial mycelium formation in S.lividans. Overexpression suppresses the no aerial hyphae phenotype of a chaplin-negative strain, probably by inducing expression of SapB. Overexpression of RamR show there are about 280 genes having at least a threefold increase or fourfold decrease in RNA abundance versus wild-type including gene cluster SCO4072-SCO4075. This Streptomyces coelicolor (strain ATCC BAA-471 / A3(2) / M145) protein is Response regulator RamR.